A 154-amino-acid chain; its full sequence is 3-hydroxyacyl-[acyl-carrier-protein] dehydratase FabZ (154 aa).

H60 is an active-site residue.

This sequence belongs to the thioester dehydratase family. FabZ subfamily.

The protein localises to the cytoplasm. The enzyme catalyses a (3R)-hydroxyacyl-[ACP] = a (2E)-enoyl-[ACP] + H2O. Its function is as follows. Involved in unsaturated fatty acids biosynthesis. Catalyzes the dehydration of short chain beta-hydroxyacyl-ACPs and long chain saturated and unsaturated beta-hydroxyacyl-ACPs. This chain is 3-hydroxyacyl-[acyl-carrier-protein] dehydratase FabZ, found in Haemophilus ducreyi (strain 35000HP / ATCC 700724).